We begin with the raw amino-acid sequence, 261 residues long: Ribonuclease HII (261 aa).

In terms of domain architecture, RNase H type-2 spans 71 to 259 (KYIAGVDEVG…VKEAKLHFDS (189 aa)). A divalent metal cation contacts are provided by Asp-77, Glu-78, and Asp-169.

It belongs to the RNase HII family. Mn(2+) serves as cofactor. Requires Mg(2+) as cofactor.

The protein localises to the cytoplasm. The enzyme catalyses Endonucleolytic cleavage to 5'-phosphomonoester.. Its function is as follows. Endonuclease that specifically degrades the RNA of RNA-DNA hybrids. This Listeria monocytogenes serotype 4b (strain F2365) protein is Ribonuclease HII.